Reading from the N-terminus, the 747-residue chain is Polyribonucleotide nucleotidyltransferase (747 aa).

Mg(2+) is bound by residues Asp-487 and Asp-493. The region spanning 554–613 is the KH domain; it reads PSTTTIKIDKDKIRDIIGPGGKVIKEICETSGAKIDISDDGSVSVYASDRDKLKVALDKI. The S1 motif domain occupies 623–691; that stretch reads GEIFNGTVMK…NKGKAKLTIK (69 aa). Positions 691-747 are disordered; sequence KNADKDKSSNNPKPKNNVNNAKENSEPERRDSSKKRAWNEDSNNDKEEAITERKYFN. Low complexity predominate over residues 699-712; sequence SNNPKPKNNVNNAK. The span at 727–747 shows a compositional bias: basic and acidic residues; that stretch reads AWNEDSNNDKEEAITERKYFN.

The protein belongs to the polyribonucleotide nucleotidyltransferase family. It depends on Mg(2+) as a cofactor.

The protein resides in the cytoplasm. The catalysed reaction is RNA(n+1) + phosphate = RNA(n) + a ribonucleoside 5'-diphosphate. Functionally, involved in mRNA degradation. Catalyzes the phosphorolysis of single-stranded polyribonucleotides processively in the 3'- to 5'-direction. The sequence is that of Polyribonucleotide nucleotidyltransferase from Rickettsia felis (strain ATCC VR-1525 / URRWXCal2) (Rickettsia azadi).